The primary structure comprises 236 residues: Three prime repair exonuclease 2 (236 aa).

Asp-14 and Glu-16 together coordinate Mg(2+). Substrate contacts are provided by residues 16–17 (EA) and Tyr-122. His-188 acts as the Proton donor/acceptor in catalysis. Position 193 (Asp-193) interacts with Mg(2+). Residue Asp-193 participates in substrate binding.

This sequence belongs to the exonuclease superfamily. TREX family. As to quaternary structure, homodimer. Mg(2+) is required as a cofactor. As to expression, detected in heart, breast, prostate, skeletal muscle, testis, uterus, bone marrow, colon, small intestine, stomach and thymus.

It localises to the nucleus. The enzyme catalyses Exonucleolytic cleavage in the 3'- to 5'-direction to yield nucleoside 5'-phosphates.. Functionally, exonuclease with a preference for double-stranded DNA with mismatched 3' termini. May play a role in DNA repair. This is Three prime repair exonuclease 2 (TREX2) from Homo sapiens (Human).